Consider the following 189-residue polypeptide: UPF0398 protein BH1768 (189 aa).

The protein belongs to the UPF0398 family.

This Halalkalibacterium halodurans (strain ATCC BAA-125 / DSM 18197 / FERM 7344 / JCM 9153 / C-125) (Bacillus halodurans) protein is UPF0398 protein BH1768.